The primary structure comprises 319 residues: Type II methyltransferase M.RsrI (319 aa).

A compositionally biased stretch (basic residues) spans M1 to G10. A disordered region spans residues M1–S32.

The protein belongs to the N(4)/N(6)-methyltransferase family.

The catalysed reaction is a 2'-deoxyadenosine in DNA + S-adenosyl-L-methionine = an N(6)-methyl-2'-deoxyadenosine in DNA + S-adenosyl-L-homocysteine + H(+). With respect to regulation, strongly inhibited by N-ethylmaleimide, inactivated by MgCl(2) or MgSO(4). Its function is as follows. A beta subtype methylase, recognizes the double-stranded sequence 5'-GAATTC-3', methylates A-3 on both strands, and protects the DNA from cleavage by the RsrI endonuclease. This chain is Type II methyltransferase M.RsrI, found in Cereibacter sphaeroides (Rhodobacter sphaeroides).